Consider the following 216-residue polypeptide: Probable GTP-binding protein EngB (216 aa).

The 182-residue stretch at 24–205 (ATPEIAFVGR…WARLAALAAE (182 aa)) folds into the EngB-type G domain. GTP-binding positions include 32–39 (GRSNVGKS), 59–63 (GRTRA), 86–89 (DLPG), 153–156 (TKTD), and 184–186 (FSA). Residues serine 39 and threonine 61 each coordinate Mg(2+).

It belongs to the TRAFAC class TrmE-Era-EngA-EngB-Septin-like GTPase superfamily. EngB GTPase family. It depends on Mg(2+) as a cofactor.

Necessary for normal cell division and for the maintenance of normal septation. In Anaeromyxobacter dehalogenans (strain 2CP-C), this protein is Probable GTP-binding protein EngB.